A 55-amino-acid polypeptide reads, in one-letter code: UPF0434 protein BPEN_388 (55 aa).

The protein belongs to the UPF0434 family.

This is UPF0434 protein BPEN_388 from Blochmanniella pennsylvanica (strain BPEN).